A 56-amino-acid chain; its full sequence is MAKKNKNVLVRLVSTAGTGVFWVKKRNPKTQTEKLSFRKYDKVVRKHVLFKEEKIK.

The protein belongs to the bacterial ribosomal protein bL33 family.

The protein is Large ribosomal subunit protein bL33 of Rickettsia africae (strain ESF-5).